The sequence spans 351 residues: Trace amine-associated receptor 2 (351 aa).

Residues 1–48 (MAVSSEQHELSHFKRTQTKKEKFNCSEYGNRSCPENERSLGVRVAMYS) lie on the Extracellular side of the membrane. 2 N-linked (GlcNAc...) asparagine glycosylation sites follow: Asn24 and Asn30. 2 cysteine pairs are disulfide-bonded: Cys33–Cys197 and Cys116–Cys201. Residues 49-69 (FMAGSIFITIFGNLAMIISIS) form a helical membrane-spanning segment. Over 70–79 (YFKQLHTPTN) the chain is Cytoplasmic. A helical membrane pass occupies residues 80–100 (FLILSMAITDFLLGFTIMPYS). The Extracellular segment spans residues 101–118 (MIRSVENCWYFGLTFCKI). A helical membrane pass occupies residues 119 to 139 (YYSFDLMLSITSIFHLCSVAI). Topologically, residues 140-162 (DRFYAICYPLLYSTKITIPVIKR) are cytoplasmic. The helical transmembrane segment at 163–183 (LLLLCWSVPGAFAFGVVFSEA) threads the bilayer. At 184 to 207 (YADGIEGYDILVACSSSCPVMFNK) the chain is on the extracellular side. Residues 208 to 228 (LWGTTLFMAGFFTPGSMMVGI) traverse the membrane as a helical segment. Over 229-263 (YGKIFAVSRKHAHAINNLRENQNNQVKKDKKAAKT) the chain is Cytoplasmic. A helical membrane pass occupies residues 264–284 (LGIVIGVFLLCWFPCFFTILL). At 285-299 (DPFLNFSTPVVLFDA) the chain is on the extracellular side. The N-linked (GlcNAc...) asparagine glycan is linked to Asn289. A helical transmembrane segment spans residues 300–322 (LTWFGYFNSTCNPLIYGFFYPWF). Over 323-351 (RRALKYILLGKIFSSCFHNTILCMQKESE) the chain is Cytoplasmic.

The protein belongs to the G-protein coupled receptor 1 family. As to expression, not expressed in the pons, thalamus, hypothalamus, hippocampus, caudate, putamen, frontal cortex, basal forebrain, midbrain or liver.

The protein resides in the cell membrane. Functionally, orphan olfactory receptor specific for trace amines. Trace amine compounds are enriched in animal body fluids and act on trace amine-associated receptors (TAARs) to elicit both intraspecific and interspecific innate behaviors. Ligand-binding causes a conformation change that triggers signaling via the G(s)-class of G-proteins which activate adenylate cyclase. This Homo sapiens (Human) protein is Trace amine-associated receptor 2.